Consider the following 310-residue polypeptide: Olfactory receptor 2A14 (310 aa).

At 1–24 the chain is on the extracellular side; sequence MEGNKTWITDITLPRFQVGPALEI. Asn4 carries an N-linked (GlcNAc...) asparagine glycan. A helical membrane pass occupies residues 25-48; sequence LLCGLFSAFYTLTLLGNGVIFGII. Residues 49–56 lie on the Cytoplasmic side of the membrane; sequence CLDCKLHT. Residues 57–78 traverse the membrane as a helical segment; that stretch reads PMYFFLSHLAIVDISYASNYVP. The Extracellular portion of the chain corresponds to 79–99; that stretch reads KMLTNLMNQESTISFFPCIMQ. Cys96 and Cys188 are joined by a disulfide. The chain crosses the membrane as a helical span at residues 100-119; it reads TFLYLAFAHVECLILVVMSY. At 120–138 the chain is on the cytoplasmic side; the sequence is DRYADICHPLRYNSLMSWR. Residues 139 to 157 traverse the membrane as a helical segment; sequence VCTVLAVASWVFSFLLALV. At 158 to 194 the chain is on the extracellular side; sequence PLVLILSLPFCGPHEINHFFCEILSVLKLACADTWLN. The helical transmembrane segment at 195-218 threads the bilayer; the sequence is QVVIFAACVFILVGPLCLVLVSYL. Over 219-235 the chain is Cytoplasmic; sequence RILAAILRIQSGEGRRK. Residues 236 to 258 form a helical membrane-spanning segment; that stretch reads AFSTCSSHLCVVGLFFGSAIVTY. Residues 259-271 lie on the Extracellular side of the membrane; that stretch reads MAPKSRHPEEQQK. Residues 272 to 291 form a helical membrane-spanning segment; sequence VLSLFYSLFNPMLNPLIYSL. At 292–310 the chain is on the cytoplasmic side; that stretch reads RNAEVKGALRRALRKERLT.

This sequence belongs to the G-protein coupled receptor 1 family.

Its subcellular location is the cell membrane. In terms of biological role, odorant receptor. The polypeptide is Olfactory receptor 2A14 (OR2A14) (Homo sapiens (Human)).